Consider the following 370-residue polypeptide: Cytochrome b (370 aa).

4 helical membrane-spanning segments follow: residues 25-45, 69-90, 105-125, and 170-190; these read FGSM…FLAV, WLMQ…YIHI, WLSG…GYVL, and FFAL…LHVI. Residues His75 and His89 each coordinate heme b. 2 residues coordinate heme b: His174 and His188. His193 contributes to the a ubiquinone binding site. A run of 4 helical transmembrane segments spans residues 218 to 238, 280 to 300, 312 to 332, and 339 to 358; these read YKDL…VSFS, LGGA…PFTH, FMQM…WTAT, and FTLI…ISNP.

The protein belongs to the cytochrome b family. In terms of assembly, the cytochrome bc1 complex contains 3 respiratory subunits (MT-CYB, CYC1 and UQCRFS1), 2 core proteins (UQCRC1 and UQCRC2) and probably 6 low-molecular weight proteins. It depends on heme b as a cofactor.

Its subcellular location is the mitochondrion inner membrane. Its function is as follows. Component of the ubiquinol-cytochrome c reductase complex (complex III or cytochrome b-c1 complex) that is part of the mitochondrial respiratory chain. The b-c1 complex mediates electron transfer from ubiquinol to cytochrome c. Contributes to the generation of a proton gradient across the mitochondrial membrane that is then used for ATP synthesis. The polypeptide is Cytochrome b (MT-CYB) (Eunectes murinus (Green anaconda)).